The primary structure comprises 86 residues: Weak toxin 1 (86 aa).

The signal sequence occupies residues Met-1–Thr-23. Disulfide bonds link Cys-24-Cys-45, Cys-27-Cys-32, Cys-38-Cys-63, Cys-67-Cys-78, and Cys-79-Cys-84.

Belongs to the three-finger toxin family. Ancestral subfamily. Orphan group II sub-subfamily. In terms of tissue distribution, expressed by the venom gland.

The protein resides in the secreted. Functionally, binds with low affinity to muscular (alpha-1-beta-1-delta-epsilon/CHRNA1-CHRNB1-CHRND-CHRNE) and very low affinity to neuronal (alpha-7/CHRNA7) nicotinic acetylcholine receptor (nAChR). This Bungarus candidus (Malayan krait) protein is Weak toxin 1.